The primary structure comprises 180 residues: Small ribosomal subunit protein uS5 (180 aa).

Residues 24 to 87 (MIEKLVAVNR…EQARKNLVSV (64 aa)) form the S5 DRBM domain.

It belongs to the universal ribosomal protein uS5 family. In terms of assembly, part of the 30S ribosomal subunit. Contacts proteins S4 and S8.

In terms of biological role, with S4 and S12 plays an important role in translational accuracy. Functionally, located at the back of the 30S subunit body where it stabilizes the conformation of the head with respect to the body. This chain is Small ribosomal subunit protein uS5, found in Stenotrophomonas maltophilia (strain R551-3).